We begin with the raw amino-acid sequence, 1577 residues long: Dynamin-binding protein (1577 aa).

Methionine 1 carries the N-acetylmethionine modification. 4 consecutive SH3 domains span residues 2–61 (EAGS…IVTI), 66–126 (EGER…ELCL), 145–204 (YSMG…LLGP), and 243–302 (EPGT…LCPD). Disordered regions lie at residues 211–244 (SVSS…EEEP) and 335–395 (EEQR…WEMP). The span at 230-244 (VGEEEIGPDEDEEEP) shows a compositional bias: acidic residues. Residues 335–344 (EEQRHETSDH) show a composition bias toward basic and acidic residues. Serine 496 is subject to Phosphoserine. Disordered regions lie at residues 591–624 (GSSK…TSPH) and 639–659 (VRPS…NAVS). Over residues 639-649 (VRPSRPAPLPP) the composition is skewed to pro residues. Serine 684 is modified (phosphoserine). Positions 693–757 (LVLVRIEEME…ELQQLREMTL (65 aa)) form a coiled coil. Residues 784–967 (KRAKVIEELL…KEINVNINEY (184 aa)) form the DH domain. The BAR domain occupies 1008-1217 (LKHLTGFAPQ…LKVAGREGNL (210 aa)). A coiled-coil region spans residues 1136-1173 (ERAEKLKDKKTLEELQSARNNYEALNAQLLDELPKFHQ). An SH3 5 domain is found at 1285-1348 (PPEKLFQAER…YSSFLKPYNP (64 aa)). Positions 1348–1487 (PRRSHSDASV…SVPGRNGQSQ (140 aa)) are disordered. Positions 1376 to 1405 (RQNSGSTLTFNPSSMAVSFTSGSCQKQPQD) are enriched in polar residues. Low complexity predominate over residues 1419-1442 (SASLNPSNSESSPSRCPSDPDSTS). Positions 1513-1576 (EGNQVYFAVY…PSNYIRKTEY (64 aa)) constitute an SH3 6 domain.

Binds DNM1 via its N-terminal SH3 domains. The C-terminal SH3 domain binds a complex containing actin, tubulin, Hsp70 and actin-regulatory proteins, such as ENAH, EVL, WIRE, CR16, WAVE1 and NAP1L1. Interacts with FASLG. Interacts (via SH3 domain 6) with WASL. Interacts (via SH3 domain 6) interacts with ENAH. Interacts (via C-terminal domain) with TJP1; required for the apical cell-cell junction localization of DNMBP. In terms of assembly, (Microbial infection) Interacts (via SH3 domain 6) with L.monocytogenes InlC. In terms of tissue distribution, detected in heart, brain, lung, liver, skeletal muscle, kidney and pancreas.

Its subcellular location is the cytoplasm. The protein localises to the golgi apparatus. The protein resides in the golgi stack. It is found in the cytoskeleton. It localises to the synapse. Its subcellular location is the cell junction. In terms of biological role, plays a critical role as a guanine nucleotide exchange factor (GEF) for CDC42 in several intracellular processes associated with the actin and microtubule cytoskeleton. Regulates the structure of apical junctions through F-actin organization in epithelial cells. Participates in the normal lumenogenesis of epithelial cell cysts by regulating spindle orientation. Plays a role in ciliogenesis. May play a role in membrane trafficking between the cell surface and the Golgi. The chain is Dynamin-binding protein from Homo sapiens (Human).